The sequence spans 136 residues: uncharacterized protein (136 aa).

This is an uncharacterized protein from Enterobacteria phage T4 (Bacteriophage T4).